Here is a 281-residue protein sequence, read N- to C-terminus: Nuclear transcription factor Y subunit nfya-2 (281 aa).

Disordered regions lie at residues 1-27 (MNPRGNPSKMPTQIVLNRRPAAPARPQ) and 163-261 (REMR…VQEE). The short motif at 150-173 (MVNPRQYKRIIKRREMRQKMEDSG) is the Subunit association domain (SAD) element. A compositionally biased stretch (basic and acidic residues) spans 166–188 (RQKMEDSGRLPLERQKYMHESRR). A DNA-binding region (NFYA/HAP2-type) is located at residues 180–204 (QKYMHESRRQHALKRRRTGGRFDAN). Over residues 189 to 198 (QHALKRRRTG) the composition is skewed to basic residues. The span at 204–220 (NAEAAAASSEPSISSAA) shows a compositional bias: low complexity.

The protein belongs to the NFYA/HAP2 subunit family. Forms a heterotrimeric transcription factor complex (nfya-2-NF-Y complex) composed of nfya-2, nfyb-1 and nfyc-1. Interacts with the nfyb-1 and nfyc-1 dimer; the interaction is required for subsequent binding to the 5'-CCAAT-3' box motif in DNA. Does not interact with either nfyb-1 or nfyc-1 in their monomeric form. Highly expressed in certain parts of the gonads. Expressed in the spermatheca, intestine and in some neurons in the head. Not expressed in the intestine, the hypodermis, body wall muscle surrounding the pseudocoelomic space, secretory cells in the pharyngeal terminal bulb wall, in the small ganglia surrounding the pharynx and in the neurons running anteriorly to the sensory organs in the head.

It is found in the nucleus. Functionally, component of the sequence-specific heterotrimeric transcription factor (nfya-2-NF-Y) which specifically recognizes a 5'-CCAAT-3' box motif found in the promoters of its target genes to regulate their expression and control cellular identity in particular tissue types. In association with the components in the nfya-2-NF-Y complex, may repress the expression of the T-box transcription factor tbx-2 throughout larval development, which most likely restricts its expression to certain tissues. In Caenorhabditis elegans, this protein is Nuclear transcription factor Y subunit nfya-2.